The chain runs to 522 residues: DEP domain-containing protein 7 (522 aa).

The 93-residue stretch at 46 to 138 (LYTQVEVKKR…SSCSLYRFLN (93 aa)) folds into the DEP domain.

This sequence belongs to the DEPDC7 family.

The polypeptide is DEP domain-containing protein 7 (depdc7) (Xenopus laevis (African clawed frog)).